The chain runs to 182 residues: Oligoribonuclease (182 aa).

Residues 8-171 (LIWIDLEMTG…DDIRESIKEL (164 aa)) form the Exonuclease domain. The active site involves Y129.

This sequence belongs to the oligoribonuclease family.

Its subcellular location is the cytoplasm. Its function is as follows. 3'-to-5' exoribonuclease specific for small oligoribonucleotides. This is Oligoribonuclease from Haemophilus influenzae (strain 86-028NP).